We begin with the raw amino-acid sequence, 149 residues long: Calmodulin (149 aa).

Ala-2 carries the post-translational modification N-acetylalanine. 4 consecutive EF-hand domains span residues 8–43 (DQIS…LGQN), 44–79 (PTEA…KMKD), 81–116 (DSEE…LGEK), and 117–149 (LTDE…MMAK). The Ca(2+) site is built by Asp-21, Asp-23, Asp-25, Cys-27, Glu-32, Asp-57, Asp-59, Asn-61, Thr-63, Glu-68, Asp-94, Asp-96, Asn-98, and Glu-105. N6,N6,N6-trimethyllysine is present on Lys-116. Ca(2+)-binding residues include Asp-130, Asp-132, Asp-134, Gln-136, and Glu-141.

This sequence belongs to the calmodulin family.

Calmodulin mediates the control of a large number of enzymes, ion channels and other proteins by Ca(2+). Among the enzymes to be stimulated by the calmodulin-Ca(2+) complex are a number of protein kinases and phosphatases. The chain is Calmodulin (CAM) from Malus domestica (Apple).